A 294-amino-acid polypeptide reads, in one-letter code: tRNA pseudouridine synthase B (294 aa).

The active-site Nucleophile is D39.

This sequence belongs to the pseudouridine synthase TruB family. Type 1 subfamily.

The catalysed reaction is uridine(55) in tRNA = pseudouridine(55) in tRNA. In terms of biological role, responsible for synthesis of pseudouridine from uracil-55 in the psi GC loop of transfer RNAs. The sequence is that of tRNA pseudouridine synthase B from Streptococcus pyogenes serotype M6 (strain ATCC BAA-946 / MGAS10394).